The following is a 203-amino-acid chain: Dephospho-CoA kinase (203 aa).

In terms of domain architecture, DPCK spans 3-202 (KIGLTGSIGM…MRIAKGDFRN (200 aa)). 11 to 16 (GMGKST) provides a ligand contact to ATP.

This sequence belongs to the CoaE family.

The protein localises to the cytoplasm. The catalysed reaction is 3'-dephospho-CoA + ATP = ADP + CoA + H(+). Its pathway is cofactor biosynthesis; coenzyme A biosynthesis; CoA from (R)-pantothenate: step 5/5. Functionally, catalyzes the phosphorylation of the 3'-hydroxyl group of dephosphocoenzyme A to form coenzyme A. The chain is Dephospho-CoA kinase from Rhizobium etli (strain ATCC 51251 / DSM 11541 / JCM 21823 / NBRC 15573 / CFN 42).